The chain runs to 175 residues: Alkyl hydroperoxide reductase AhpD (175 aa).

Cysteine 131 serves as the catalytic Proton donor. A disulfide bridge links cysteine 131 with cysteine 134. Cysteine 134 (cysteine sulfenic acid (-SOH) intermediate) is an active-site residue.

Belongs to the AhpD family.

The enzyme catalyses N(6)-[(R)-dihydrolipoyl]-L-lysyl-[lipoyl-carrier protein] + a hydroperoxide = N(6)-[(R)-lipoyl]-L-lysyl-[lipoyl-carrier protein] + an alcohol + H2O. Its function is as follows. Antioxidant protein with alkyl hydroperoxidase activity. Required for the reduction of the AhpC active site cysteine residues and for the regeneration of the AhpC enzyme activity. This is Alkyl hydroperoxide reductase AhpD from Brucella canis (strain ATCC 23365 / NCTC 10854 / RM-666).